Consider the following 334-residue polypeptide: Ketol-acid reductoisomerase (NADP(+)) (334 aa).

One can recognise a KARI N-terminal Rossmann domain in the interval 2–181 (TKVYYDQSVE…GATRAGVIET (180 aa)). Residues 25–28 (YGSQ), Arg-48, Ser-52, and 82–85 (DEIQ) each bind NADP(+). His-107 is an active-site residue. Gly-133 serves as a coordination point for NADP(+). The KARI C-terminal knotted domain occupies 182 to 327 (TFKEETETDL…RELRKMMPFI (146 aa)). Residues Asp-190, Glu-194, Glu-226, and Glu-230 each coordinate Mg(2+). Position 251 (Ser-251) interacts with substrate.

Belongs to the ketol-acid reductoisomerase family. Mg(2+) serves as cofactor.

The enzyme catalyses (2R)-2,3-dihydroxy-3-methylbutanoate + NADP(+) = (2S)-2-acetolactate + NADPH + H(+). It carries out the reaction (2R,3R)-2,3-dihydroxy-3-methylpentanoate + NADP(+) = (S)-2-ethyl-2-hydroxy-3-oxobutanoate + NADPH + H(+). It participates in amino-acid biosynthesis; L-isoleucine biosynthesis; L-isoleucine from 2-oxobutanoate: step 2/4. It functions in the pathway amino-acid biosynthesis; L-valine biosynthesis; L-valine from pyruvate: step 2/4. In terms of biological role, involved in the biosynthesis of branched-chain amino acids (BCAA). Catalyzes an alkyl-migration followed by a ketol-acid reduction of (S)-2-acetolactate (S2AL) to yield (R)-2,3-dihydroxy-isovalerate. In the isomerase reaction, S2AL is rearranged via a Mg-dependent methyl migration to produce 3-hydroxy-3-methyl-2-ketobutyrate (HMKB). In the reductase reaction, this 2-ketoacid undergoes a metal-dependent reduction by NADPH to yield (R)-2,3-dihydroxy-isovalerate. The chain is Ketol-acid reductoisomerase (NADP(+)) from Staphylococcus haemolyticus (strain JCSC1435).